Consider the following 1367-residue polypeptide: Paired amphipathic helix protein Sin3-like 2 (1367 aa).

Positions 14 to 44 (QFKRPLGSSRGESYEQSPITGGGSIGEGGIN) are disordered. Gly residues predominate over residues 33–42 (TGGGSIGEGG). 2 PAH domains span residues 46–116 (QKLT…LPKG) and 130–200 (KTVE…LPDS). Residues 212–322 (SQAQRYDDRG…EAYSGPASHS (111 aa)) are disordered. Basic and acidic residues-rich tracts occupy residues 230-286 (MFME…SRDL) and 299-311 (FSEK…RMEG). Residues 327–396 (LKSMYNQAFL…DEFNQFFERC (70 aa)) enclose the PAH 3 domain. 4 disordered regions span residues 417-446 (EENL…KERS), 786-883 (DVHA…LSKP), 912-946 (QSDT…DSED), and 958-1031 (ATAK…EGME). 2 stretches are compositionally biased toward basic and acidic residues: residues 424 to 446 (VKGE…KERS) and 806 to 819 (SSGK…DLAN). Polar residues-rich tracts occupy residues 851–876 (ATSS…SSGS) and 912–923 (QSDTSKANSNYD). Positions 958–967 (ATAKTEHSVE) are enriched in basic and acidic residues. Acidic residues-rich tracts occupy residues 968–989 (AEGE…EAGE) and 997–1016 (IGDE…EHDE). Ser1023 is modified (phosphoserine).

It localises to the nucleus. Acts as a transcriptional repressor. Plays roles in regulating gene expression and genome stability. This chain is Paired amphipathic helix protein Sin3-like 2 (SNL2), found in Arabidopsis thaliana (Mouse-ear cress).